Consider the following 396-residue polypeptide: Putative peptide chain release factor 1, mitochondrial (396 aa).

Position 270 is an N5-methylglutamine (Gln-270).

Belongs to the prokaryotic/mitochondrial release factor family. In terms of processing, methylation of glutamine in the GGQ triplet is conserved from bacteria to mammals.

Its subcellular location is the mitochondrion. This is Putative peptide chain release factor 1, mitochondrial from Schizosaccharomyces pombe (strain 972 / ATCC 24843) (Fission yeast).